The chain runs to 356 residues: 4-hydroxy-3-methylbut-2-en-1-yl diphosphate synthase (flavodoxin) (356 aa).

The [4Fe-4S] cluster site is built by C262, C265, C297, and E304.

Belongs to the IspG family. Requires [4Fe-4S] cluster as cofactor.

The enzyme catalyses (2E)-4-hydroxy-3-methylbut-2-enyl diphosphate + oxidized [flavodoxin] + H2O + 2 H(+) = 2-C-methyl-D-erythritol 2,4-cyclic diphosphate + reduced [flavodoxin]. It participates in isoprenoid biosynthesis; isopentenyl diphosphate biosynthesis via DXP pathway; isopentenyl diphosphate from 1-deoxy-D-xylulose 5-phosphate: step 5/6. Functionally, converts 2C-methyl-D-erythritol 2,4-cyclodiphosphate (ME-2,4cPP) into 1-hydroxy-2-methyl-2-(E)-butenyl 4-diphosphate. This chain is 4-hydroxy-3-methylbut-2-en-1-yl diphosphate synthase (flavodoxin), found in Campylobacter fetus subsp. fetus (strain 82-40).